A 303-amino-acid chain; its full sequence is 4-sulfomuconolactone hydrolase (303 aa).

It belongs to the metallo-dependent hydrolases superfamily. Sulfomuconolactone hydrolase family. In terms of assembly, monomer. Zn(2+) serves as cofactor.

The enzyme catalyses 4-sulfomuconolactone + H2O = maleylacetate + sulfite + 2 H(+). With respect to regulation, completely inhibited by ZnCl(2) and CuCl(2). In terms of biological role, involved in the degradation of 4-sulfocatechol which is a central intermediate in the degradation of substituted sulfonated benzenes. Catalyzes the hydrolytical desulfonation of 4-sulfomuconolactone to yield maleylacetate. This Hydrogenophaga intermedia protein is 4-sulfomuconolactone hydrolase.